Consider the following 462-residue polypeptide: ATP synthase subunit beta (462 aa).

151–158 (GGAGVGKT) contributes to the ATP binding site.

This sequence belongs to the ATPase alpha/beta chains family. F-type ATPases have 2 components, CF(1) - the catalytic core - and CF(0) - the membrane proton channel. CF(1) has five subunits: alpha(3), beta(3), gamma(1), delta(1), epsilon(1). CF(0) has four main subunits: a(1), b(1), b'(1) and c(9-12).

It is found in the cell inner membrane. It catalyses the reaction ATP + H2O + 4 H(+)(in) = ADP + phosphate + 5 H(+)(out). Its function is as follows. Produces ATP from ADP in the presence of a proton gradient across the membrane. The catalytic sites are hosted primarily by the beta subunits. In Chlorobium limicola (strain DSM 245 / NBRC 103803 / 6330), this protein is ATP synthase subunit beta.